We begin with the raw amino-acid sequence, 457 residues long: Chromosomal replication initiator protein DnaA (457 aa).

The tract at residues Met1–Phe75 is domain I, interacts with DnaA modulators. Residues Phe75–Ala118 form a domain II region. The tract at residues Thr119–Ser335 is domain III, AAA+ region. ATP contacts are provided by Gly163, Gly165, Lys166, and Thr167. A domain IV, binds dsDNA region spans residues Ser336–Lys457.

The protein belongs to the DnaA family. Oligomerizes as a right-handed, spiral filament on DNA at oriC.

The protein localises to the cytoplasm. Its function is as follows. Plays an essential role in the initiation and regulation of chromosomal replication. ATP-DnaA binds to the origin of replication (oriC) to initiate formation of the DNA replication initiation complex once per cell cycle. Binds the DnaA box (a 9 base pair repeat at the origin) and separates the double-stranded (ds)DNA. Forms a right-handed helical filament on oriC DNA; dsDNA binds to the exterior of the filament while single-stranded (ss)DNA is stabiized in the filament's interior. The ATP-DnaA-oriC complex binds and stabilizes one strand of the AT-rich DNA unwinding element (DUE), permitting loading of DNA polymerase. After initiation quickly degrades to an ADP-DnaA complex that is not apt for DNA replication. Binds acidic phospholipids. This chain is Chromosomal replication initiator protein DnaA, found in Clostridium perfringens (strain ATCC 13124 / DSM 756 / JCM 1290 / NCIMB 6125 / NCTC 8237 / Type A).